A 161-amino-acid polypeptide reads, in one-letter code: Allophycocyanin beta chain (161 aa).

Asn71 carries the post-translational modification N4-methylasparagine. Cys81 provides a ligand contact to (2R,3E)-phycocyanobilin.

It belongs to the phycobiliprotein family. In terms of assembly, heterodimer of an alpha and a beta chain. In terms of processing, contains one covalently linked phycocyanobilin chromophore.

It is found in the plastid. It localises to the chloroplast thylakoid membrane. Light-harvesting photosynthetic bile pigment-protein from the phycobiliprotein complex. Allophycocyanin has a maximum absorption at approximately 650 nanometers. The chain is Allophycocyanin beta chain (apcB) from Porphyra purpurea (Red seaweed).